Here is a 286-residue protein sequence, read N- to C-terminus: MKILKTIAEVRYYISEERRLGFSIGFVPTMGALHEGHLALVERAKAMCDRVLVSIFVNPKQFGPHEDFAQYPRDLRSDCALLKKAGVECIFAPSVDEMWPAGNDTIVQVEKLSRILMGKLRPGHFCGVTSVVAKLFNIVQPDKAFFGEKDFQQILIIRRMVEDLAFPVEIVGVPILREADGVAHSSRNQFLTLEDRKAAKIIPESGKAAEKLYHEGERSVDKLCKIVRDTLQKETRAIIEAIDLRDMETLCVVKGKLNRPAVLLLTVRFGEVRLIDQYILQEKGGK.

30 to 37 (MGALHEGH) provides a ligand contact to ATP. H37 (proton donor) is an active-site residue. Q61 serves as a coordination point for (R)-pantoate. Beta-alanine is bound at residue Q61. 147 to 150 (GEKD) contacts ATP. Position 153 (Q153) interacts with (R)-pantoate. ATP contacts are provided by residues L176 and 184–187 (HSSR).

It belongs to the pantothenate synthetase family. Homodimer.

It localises to the cytoplasm. It carries out the reaction (R)-pantoate + beta-alanine + ATP = (R)-pantothenate + AMP + diphosphate + H(+). Its pathway is cofactor biosynthesis; (R)-pantothenate biosynthesis; (R)-pantothenate from (R)-pantoate and beta-alanine: step 1/1. Catalyzes the condensation of pantoate with beta-alanine in an ATP-dependent reaction via a pantoyl-adenylate intermediate. The sequence is that of Pantothenate synthetase from Bartonella tribocorum (strain CIP 105476 / IBS 506).